The primary structure comprises 292 residues: Ribonuclease HIII (292 aa).

Residues 76-292 (TNLIGTDEVG…TQKAMKIAQL (217 aa)) enclose the RNase H type-2 domain. Positions 82, 83, and 186 each coordinate a divalent metal cation.

Belongs to the RNase HII family. RnhC subfamily. Mn(2+) serves as cofactor. The cofactor is Mg(2+).

It localises to the cytoplasm. The catalysed reaction is Endonucleolytic cleavage to 5'-phosphomonoester.. In terms of biological role, endonuclease that specifically degrades the RNA of RNA-DNA hybrids. The chain is Ribonuclease HIII from Lactococcus lactis subsp. cremoris (strain SK11).